The sequence spans 57 residues: Small ribosomal subunit protein eS31 (57 aa).

Zn(2+) is bound by residues C29, C32, C47, and C50. Residues 29 to 50 form a C4-type zinc finger; it reads CSRCGKGTYMSEHKDRNTCGKC.

The protein belongs to the eukaryotic ribosomal protein eS31 family. As to quaternary structure, part of the 30S ribosomal subunit. The cofactor is Zn(2+).

The protein is Small ribosomal subunit protein eS31 of Nitrosopumilus maritimus (strain SCM1).